Reading from the N-terminus, the 473-residue chain is Kremen protein 1 (473 aa).

An N-terminal signal peptide occupies residues M1–A19. Residues R21–T392 lie on the Extracellular side of the membrane. In terms of domain architecture, Kringle spans E31 to C114. Cystine bridges form between C32-C114, C55-C95, C84-C109, C122-C186, C147-C167, C151-C169, C190-C198, and C214-C240. N59 is a glycosylation site (N-linked (GlcNAc...) asparagine). Residues M116–L210 enclose the WSC domain. A CUB domain is found at C214–T321. 5 N-linked (GlcNAc...) asparagine glycosylation sites follow: N217, N255, N293, N333, and N345. The chain crosses the membrane as a helical span at residues V393–L413. Residues H414–D473 lie on the Cytoplasmic side of the membrane. Residues H414–D473 are essential for apoptotic activity.

Forms a ternary complex with DKK1 and LRP6. Interacts with LRP6 in a DKK1-dependent manner. Interacts with DKK1 and RSPO1 (via FU repeats).

It is found in the cell membrane. Its function is as follows. Receptor for Dickkopf proteins. Cooperates with DKK1/2 to inhibit Wnt/beta-catenin signaling by promoting the endocytosis of Wnt receptors LRP5 and LRP6. In the absence of DKK1, potentiates Wnt-beta-catenin signaling by maintaining LRP5 or LRP6 at the cell membrane. Can trigger apoptosis in a Wnt-independent manner and this apoptotic activity is inhibited upon binding of the ligand DKK1. Plays a role in limb development; attenuates Wnt signaling in the developing limb to allow normal limb patterning and can also negatively regulate bone formation. Modulates cell fate decisions in the developing cochlea with an inhibitory role in hair cell fate specification. The chain is Kremen protein 1 (Kremen1) from Rattus norvegicus (Rat).